Reading from the N-terminus, the 183-residue chain is Ubiquitin-conjugating enzyme E2 6 (183 aa).

The 148-residue stretch at 1–148 folds into the UBC core domain; the sequence is MASPSKRREM…VKEYCEKYAK (148 aa). The Glycyl thioester intermediate role is filled by C85. The disordered stretch occupies residues 148–183; that stretch reads KPEEILSDDDDDDSMSEDGSDSDDDDDDEIVGKADP. Residues 152–176 are compositionally biased toward acidic residues; sequence ILSDDDDDDSMSEDGSDSDDDDDDE.

It belongs to the ubiquitin-conjugating enzyme family. Expressed in roots, petals, sepals and silique walls.

It carries out the reaction S-ubiquitinyl-[E1 ubiquitin-activating enzyme]-L-cysteine + [E2 ubiquitin-conjugating enzyme]-L-cysteine = [E1 ubiquitin-activating enzyme]-L-cysteine + S-ubiquitinyl-[E2 ubiquitin-conjugating enzyme]-L-cysteine.. It participates in protein modification; protein ubiquitination. Its function is as follows. Accepts the ubiquitin from the E1 complex and catalyzes its covalent attachment to other proteins. The sequence is that of Ubiquitin-conjugating enzyme E2 6 (UBC6) from Arabidopsis thaliana (Mouse-ear cress).